The sequence spans 113 residues: U11-theraphotoxin-Hhn1a (113 aa).

Positions 1–21 are cleaved as a signal peptide; sequence MNTVRVTFLLVFVLAVSLGQA. Positions 22-74 are excised as a propeptide; the sequence is DKDENRMEMQGKTEQGKSYLDFAENLLLQKLEELEAKLLEEDSEESRNSRQKR. Intrachain disulfides connect C75-C90, C82-C95, and C89-C110.

This sequence belongs to the neurotoxin 14 (magi-1) family. 01 (HNTX-16) subfamily. Expressed by the venom gland.

It localises to the secreted. In terms of biological role, probable ion channel inhibitor. In Cyriopagopus hainanus (Chinese bird spider), this protein is U11-theraphotoxin-Hhn1a.